The chain runs to 90 residues: MGAAYKVFGKTVQPHVLAISTFIATAAVASYFTTKPKTKNEGKNSSALSQQKSGESSNSDAMGKDDDVVKSIEGFLNDLEKDTRQDTKAN.

A helical membrane pass occupies residues 15 to 34 (HVLAISTFIATAAVASYFTT). The segment at 34-65 (TKPKTKNEGKNSSALSQQKSGESSNSDAMGKD) is disordered. Residues 43 to 60 (KNSSALSQQKSGESSNSD) are compositionally biased toward polar residues. Asparagine 44 is a glycosylation site (N-linked (GlcNAc...) asparagine).

The protein localises to the mitochondrion membrane. This is an uncharacterized protein from Saccharomyces cerevisiae (strain ATCC 204508 / S288c) (Baker's yeast).